The following is an 87-amino-acid chain: Small ribosomal subunit protein bS16 (87 aa).

It belongs to the bacterial ribosomal protein bS16 family.

This Buchnera aphidicola subsp. Baizongia pistaciae (strain Bp) protein is Small ribosomal subunit protein bS16.